The primary structure comprises 227 residues: Ribonuclease 3 (227 aa).

An RNase III domain is found at 3 to 130 (TNAISKIIKY…LIGAIYLDGG (128 aa)). Residue Glu43 coordinates Mg(2+). Residue Asp47 is part of the active site. 2 residues coordinate Mg(2+): Asn116 and Glu119. Residue Glu119 is part of the active site. One can recognise a DRBM domain in the interval 155–224 (DAKTILQEWA…ASLMLAKINY (70 aa)).

The protein belongs to the ribonuclease III family. Homodimer. It depends on Mg(2+) as a cofactor.

It is found in the cytoplasm. It catalyses the reaction Endonucleolytic cleavage to 5'-phosphomonoester.. In terms of biological role, digests double-stranded RNA. Involved in the processing of primary rRNA transcript to yield the immediate precursors to the large and small rRNAs (23S and 16S). Processes some mRNAs, and tRNAs when they are encoded in the rRNA operon. Processes pre-crRNA and tracrRNA of type II CRISPR loci if present in the organism. This Ehrlichia ruminantium (strain Gardel) protein is Ribonuclease 3.